A 577-amino-acid chain; its full sequence is Protein downstream neighbor of son homolog (577 aa).

Disordered stretches follow at residues 1–67 (MAEL…KRRN) and 328–382 (FTQP…LEEM). The segment covering 362 to 375 (ETDEVSDESDEDES) has biased composition (acidic residues).

Belongs to the DONSON family. In terms of assembly, component of the replisome complex.

It is found in the nucleus. Replisome component that maintains genome stability by protecting stalled or damaged replication forks. After the induction of replication stress, required for the stabilization of stalled replication forks, the efficient activation of the intra-S-phase and G/2M cell-cycle checkpoints and the maintenance of genome stability. This chain is Protein downstream neighbor of son homolog, found in Xenopus tropicalis (Western clawed frog).